Consider the following 802-residue polypeptide: Outer membrane usher protein CssD (802 aa).

This sequence belongs to the fimbrial export usher family.

Its subcellular location is the cell outer membrane. Its function is as follows. Involved in the export and assembly of C6 fimbrial subunits across the outer membrane. This Escherichia coli protein is Outer membrane usher protein CssD (cssD).